The following is an 824-amino-acid chain: A-adding tRNA nucleotidyltransferase (824 aa).

2 consecutive CBS domains span residues 305-363 and 367-423; these read MNTP…DEPI and VNRD…LEKL. ATP is bound at residue 459–462; that stretch reads GVVR. Positions 472 and 474 each coordinate Mg(2+). ATP-binding positions include 545–546, asparagine 550, 590–599, arginine 603, and arginine 632; these read RD and DPVRILRALR.

The protein belongs to the tRNA nucleotidyltransferase/poly(A) polymerase family. Requires Mg(2+) as cofactor.

It carries out the reaction a tRNA with a 3' CC end + ATP = a tRNA with a 3' CCA end + diphosphate. TRNA nucleotidyltransferase involved in the synthesis of the tRNA CCA terminus. Adds the terminal adenosine residue to tRNA. Can incorporate CMP into tRNA ending with C74C75 (tRNACC), with very weak efficiency. This Aquifex aeolicus (strain VF5) protein is A-adding tRNA nucleotidyltransferase.